The primary structure comprises 179 residues: Large ribosomal subunit protein uL6 (179 aa).

This sequence belongs to the universal ribosomal protein uL6 family. In terms of assembly, part of the 50S ribosomal subunit.

Its function is as follows. This protein binds to the 23S rRNA, and is important in its secondary structure. It is located near the subunit interface in the base of the L7/L12 stalk, and near the tRNA binding site of the peptidyltransferase center. This chain is Large ribosomal subunit protein uL6, found in Leptospira interrogans serogroup Icterohaemorrhagiae serovar copenhageni (strain Fiocruz L1-130).